The chain runs to 273 residues: Undecaprenyl-diphosphatase (273 aa).

A run of 7 helical transmembrane segments spans residues 6 to 26 (SLLI…LPVS), 45 to 65 (AKTF…VMFW), 90 to 110 (LTLI…LVFH), 116 to 136 (LFNP…LIAA), 190 to 210 (YAAS…ATVL), 222 to 242 (ADIP…LIAI), and 252 to 272 (ISFI…YVVF).

It belongs to the UppP family.

It is found in the cell inner membrane. It catalyses the reaction di-trans,octa-cis-undecaprenyl diphosphate + H2O = di-trans,octa-cis-undecaprenyl phosphate + phosphate + H(+). Its function is as follows. Catalyzes the dephosphorylation of undecaprenyl diphosphate (UPP). Confers resistance to bacitracin. This is Undecaprenyl-diphosphatase from Salmonella arizonae (strain ATCC BAA-731 / CDC346-86 / RSK2980).